The sequence spans 212 residues: Cytidylate kinase (212 aa).

7 to 15 contributes to the ATP binding site; that stretch reads GPAASGKGT.

This sequence belongs to the cytidylate kinase family. Type 1 subfamily.

It is found in the cytoplasm. The enzyme catalyses CMP + ATP = CDP + ADP. The catalysed reaction is dCMP + ATP = dCDP + ADP. This chain is Cytidylate kinase, found in Rhodopseudomonas palustris (strain BisB18).